The following is an 861-amino-acid chain: Protein argonaute-4 (861 aa).

One can recognise a PAZ domain in the interval 219–338 (PIIEFMCEVL…LPLEVCNIVA (120 aa)). One can recognise a Piwi domain in the interval 509 to 820 (LIVVILPGKT…VAFRARYHLV (312 aa)). A disordered region spans residues 825–846 (DSAEGSHVSGQSNGRDPQALAK).

The protein belongs to the argonaute family. Ago subfamily. As to quaternary structure, interacts with EIF4B, IMP8, PRMT5, TNRC6A and TNRC6B. Interacts with ZFP36. Ubiquitinated on surface-exposed lysines by a SCF-like E3 ubiquitin-protein ligase complex containing ZSWIM8 during target-directed microRNA degradation (TDMD), a process that mediates degradation of microRNAs (miRNAs). Ubiquitination by the SCF-like E3 ubiquitin-protein ligase complex containing ZSWIM8 leads to its subsequent degradation, thereby exposing miRNAs for degradation. ZSWIM8 recognizes and binds AGO4 when it is engaged with a TDMD target.

It is found in the cytoplasm. The protein resides in the P-body. In terms of biological role, required for RNA-mediated gene silencing (RNAi). Binds to short RNAs such as microRNAs (miRNAs) and represses the translation of mRNAs which are complementary to them. Lacks endonuclease activity and does not appear to cleave target mRNAs. The protein is Protein argonaute-4 (Ago4) of Mus musculus (Mouse).